Consider the following 578-residue polypeptide: ATP-dependent RNA helicase dbp3 (578 aa).

Residues 59–69 show a composition bias toward basic and acidic residues; sequence KRSADEEASVK. Positions 59–117 are disordered; sequence KRSADEEASVKRKEKKSKHEHKKHKKDKPSADKDRISKKDKKKSKKGKSKTKEESIEIN. The span at 70 to 85 shows a compositional bias: basic residues; it reads RKEKKSKHEHKKHKKD. Over residues 86–95 the composition is skewed to basic and acidic residues; the sequence is KPSADKDRIS. Positions 96–107 are enriched in basic residues; the sequence is KKDKKKSKKGKS. The Q motif signature appears at 167-193; that stretch reads LQFDELDVSAKLREGLKNYKEPTPIQA. The 178-residue stretch at 196–373 folds into the Helicase ATP-binding domain; it reads WPYLLAGRDV…ATFLKDPVKI (178 aa). 209 to 216 lines the ATP pocket; that stretch reads AETGSGKT. Residues 316 to 319 carry the DEAD box motif; the sequence is DEAD. Residues 402 to 550 enclose the Helicase C-terminal domain; it reads MLDNLLRKHL…DIPEGLFKFG (149 aa).

Belongs to the DEAD box helicase family. DDX5/DBP2 subfamily.

It is found in the nucleus. The protein resides in the nucleolus. It catalyses the reaction ATP + H2O = ADP + phosphate + H(+). ATP-dependent RNA helicase required for 60S ribosomal subunit synthesis. Involved in efficient pre-rRNA processing, predominantly at site A3, which is necessary for the normal formation of 25S and 5.8S rRNAs. This is ATP-dependent RNA helicase dbp3 (dbp3) from Schizosaccharomyces pombe (strain 972 / ATCC 24843) (Fission yeast).